The sequence spans 162 residues: NADH-quinone oxidoreductase subunit I (162 aa).

4Fe-4S ferredoxin-type domains are found at residues 53 to 83 (LRRYANGEERCIACKLCEAVCPALAITIEAE) and 93 to 122 (TRYDIDMTKCIYCGLCEEACPVDAIVEGPN). [4Fe-4S] cluster-binding residues include Cys-63, Cys-66, Cys-69, Cys-73, Cys-102, Cys-105, Cys-108, and Cys-112.

It belongs to the complex I 23 kDa subunit family. As to quaternary structure, NDH-1 is composed of 14 different subunits. Subunits NuoA, H, J, K, L, M, N constitute the membrane sector of the complex. Requires [4Fe-4S] cluster as cofactor.

It is found in the cell inner membrane. It catalyses the reaction a quinone + NADH + 5 H(+)(in) = a quinol + NAD(+) + 4 H(+)(out). Its function is as follows. NDH-1 shuttles electrons from NADH, via FMN and iron-sulfur (Fe-S) centers, to quinones in the respiratory chain. The immediate electron acceptor for the enzyme in this species is believed to be ubiquinone. Couples the redox reaction to proton translocation (for every two electrons transferred, four hydrogen ions are translocated across the cytoplasmic membrane), and thus conserves the redox energy in a proton gradient. This is NADH-quinone oxidoreductase subunit I from Granulibacter bethesdensis (strain ATCC BAA-1260 / CGDNIH1).